We begin with the raw amino-acid sequence, 309 residues long: Sulfate adenylyltransferase subunit 2 (309 aa).

Belongs to the PAPS reductase family. CysD subfamily. Heterodimer composed of CysD, the smaller subunit, and CysN.

It catalyses the reaction sulfate + ATP + H(+) = adenosine 5'-phosphosulfate + diphosphate. Its pathway is sulfur metabolism; hydrogen sulfide biosynthesis; sulfite from sulfate: step 1/3. Its function is as follows. With CysN forms the ATP sulfurylase (ATPS) that catalyzes the adenylation of sulfate producing adenosine 5'-phosphosulfate (APS) and diphosphate, the first enzymatic step in sulfur assimilation pathway. APS synthesis involves the formation of a high-energy phosphoric-sulfuric acid anhydride bond driven by GTP hydrolysis by CysN coupled to ATP hydrolysis by CysD. The chain is Sulfate adenylyltransferase subunit 2 from Mycolicibacterium vanbaalenii (strain DSM 7251 / JCM 13017 / BCRC 16820 / KCTC 9966 / NRRL B-24157 / PYR-1) (Mycobacterium vanbaalenii).